The sequence spans 231 residues: ATP phosphoribosyltransferase (231 aa).

Belongs to the ATP phosphoribosyltransferase family. Short subfamily. As to quaternary structure, heteromultimer composed of HisG and HisZ subunits.

The protein localises to the cytoplasm. It catalyses the reaction 1-(5-phospho-beta-D-ribosyl)-ATP + diphosphate = 5-phospho-alpha-D-ribose 1-diphosphate + ATP. The protein operates within amino-acid biosynthesis; L-histidine biosynthesis; L-histidine from 5-phospho-alpha-D-ribose 1-diphosphate: step 1/9. Functionally, catalyzes the condensation of ATP and 5-phosphoribose 1-diphosphate to form N'-(5'-phosphoribosyl)-ATP (PR-ATP). Has a crucial role in the pathway because the rate of histidine biosynthesis seems to be controlled primarily by regulation of HisG enzymatic activity. The sequence is that of ATP phosphoribosyltransferase from Brucella anthropi (strain ATCC 49188 / DSM 6882 / CCUG 24695 / JCM 21032 / LMG 3331 / NBRC 15819 / NCTC 12168 / Alc 37) (Ochrobactrum anthropi).